The primary structure comprises 150 residues: 3-dehydroquinate dehydratase (150 aa).

The active-site Proton acceptor is the Tyr-26. Positions 77, 83, and 90 each coordinate substrate. His-103 acts as the Proton donor in catalysis. Substrate-binding positions include 104 to 105 (LS) and Arg-114.

This sequence belongs to the type-II 3-dehydroquinase family. In terms of assembly, homododecamer.

The enzyme catalyses 3-dehydroquinate = 3-dehydroshikimate + H2O. The protein operates within metabolic intermediate biosynthesis; chorismate biosynthesis; chorismate from D-erythrose 4-phosphate and phosphoenolpyruvate: step 3/7. Functionally, catalyzes a trans-dehydration via an enolate intermediate. The protein is 3-dehydroquinate dehydratase of Sodalis glossinidius (strain morsitans).